The primary structure comprises 614 residues: Methionine--tRNA ligase (614 aa).

The 'HIGH' region motif lies at 11–21; sequence PYTNGPRHIGH. The Zn(2+) site is built by C143, C146, C156, and C159. Residues 359–363 carry the 'KMSKS' region motif; that stretch reads QFSTS. T362 lines the ATP pocket.

It belongs to the class-I aminoacyl-tRNA synthetase family. MetG type 1 subfamily. Monomer. The cofactor is Zn(2+).

Its subcellular location is the cytoplasm. It catalyses the reaction tRNA(Met) + L-methionine + ATP = L-methionyl-tRNA(Met) + AMP + diphosphate. Functionally, is required not only for elongation of protein synthesis but also for the initiation of all mRNA translation through initiator tRNA(fMet) aminoacylation. The chain is Methionine--tRNA ligase from Beutenbergia cavernae (strain ATCC BAA-8 / DSM 12333 / CCUG 43141 / JCM 11478 / NBRC 16432 / NCIMB 13614 / HKI 0122).